Here is a 532-residue protein sequence, read N- to C-terminus: MGKKVAIIGAGVSGLASIRSCLEEGLEPTCFEKSNDIGGLWKFSDHAEEGRASIYKSVFSNSSKEMMCFPDFPFPDDFPNFMHNSKIQEYIIAFAKEKNLLKYIQFKTFVSSVNKRPDFATTGQWDVTTERDGKKESAVFDAVMVCSGHHVYPNLPKESFPGLNHFKGKCFHSRDYKEPGVFNGKRVLVVGLGNSGCDIATELSRTAEQVMISSRSGSWVMSRVWDNGYPWDMLLVTRFGTFLKNNLPTAISDWLYVKQMNARFKHENYGLMPLNGVLRKEPVFNDELPASILCGIVSVKPNVKEFTETSAIFEDGTIFEGIDCVIFATGYSFAYPFLDESIIKSRNNEIILFKGVFPPLLEKSTIAVIGFVQSLGAAIPTVDLQSRWAAQVIKGTCTLPSMEDMMNDINEKMEKKRKWFGKSETIQTDYIVYMDELSSFIGAKPNIPWLFLTDPKLAMEVYFGPCSPYQFRLVGPGQWPGARNAILTQWDRSLKPMQTRVVGRLQKPCFFFHWLKLFAIPILLIAVFLVLT.

FAD-binding positions include 9-13, glutamate 32, 40-41, and 61-62; these read GAGVS, LW, and NS. NADP(+) contacts are provided by residues 60 to 61 and 195 to 198; these read SN and SGCD. Serine 401 is modified (phosphoserine). A helical membrane pass occupies residues 510–530; the sequence is FFFHWLKLFAIPILLIAVFLV.

Belongs to the FMO family. FAD is required as a cofactor.

The protein resides in the microsome membrane. It localises to the endoplasmic reticulum membrane. It catalyses the reaction trimethylamine + NADPH + O2 = trimethylamine N-oxide + NADP(+) + H2O. The enzyme catalyses N,N-dimethylaniline + NADPH + O2 + H(+) = N,N-dimethylaniline N-oxide + NADP(+) + H2O. The catalysed reaction is hypotaurine + NADPH + O2 + H(+) = taurine + NADP(+) + H2O. It carries out the reaction (S)-nicotine + NADPH + O2 = trans-(S)-nicotine N(1')-oxide + NADP(+) + H2O. It catalyses the reaction albendazole + NADPH + O2 + H(+) = albendazole S-oxide + NADP(+) + H2O. Its function is as follows. Essential hepatic enzyme that catalyzes the oxygenation of a wide variety of nitrogen- and sulfur-containing compounds including drugs as well as dietary compounds. Plays an important role in the metabolism of trimethylamine (TMA), via the production of trimethylamine N-oxide (TMAO) metabolite. TMA is generated by the action of gut microbiota using dietary precursors such as choline, choline containing compounds, betaine or L-carnitine. By regulating TMAO concentration, FMO3 directly impacts both platelet responsiveness and rate of thrombus formation. The polypeptide is Flavin-containing monooxygenase 3 (FMO3) (Pan troglodytes (Chimpanzee)).